The primary structure comprises 356 residues: DNA polymerase IV (356 aa).

A UmuC domain is found at 6-187; it reads IIHIDMDYFF…LDIGDFPGVG (182 aa). Residues Asp-10 and Asp-105 each contribute to the Mg(2+) site. Residue Glu-106 is part of the active site.

Belongs to the DNA polymerase type-Y family. Monomer. The cofactor is Mg(2+).

It is found in the cytoplasm. The catalysed reaction is DNA(n) + a 2'-deoxyribonucleoside 5'-triphosphate = DNA(n+1) + diphosphate. Its function is as follows. Poorly processive, error-prone DNA polymerase involved in untargeted mutagenesis. Copies undamaged DNA at stalled replication forks, which arise in vivo from mismatched or misaligned primer ends. These misaligned primers can be extended by PolIV. Exhibits no 3'-5' exonuclease (proofreading) activity. May be involved in translesional synthesis, in conjunction with the beta clamp from PolIII. In Staphylococcus epidermidis (strain ATCC 35984 / DSM 28319 / BCRC 17069 / CCUG 31568 / BM 3577 / RP62A), this protein is DNA polymerase IV.